Here is a 262-residue protein sequence, read N- to C-terminus: Mlc titration factor A (262 aa).

Positions 111, 148, 152, and 211 each coordinate Zn(2+).

It belongs to the MtfA family. In terms of assembly, interacts with Mlc. The cofactor is Zn(2+).

It localises to the cytoplasm. Its function is as follows. Involved in the modulation of the activity of the glucose-phosphotransferase system (glucose-PTS). Interacts with the transcriptional repressor Mlc, preventing its interaction with DNA and leading to the modulation of expression of genes regulated by Mlc, including ptsG, which encodes the PTS system glucose-specific EIICB component. Shows zinc-dependent metallopeptidase activity. The protein is Mlc titration factor A of Serratia proteamaculans (strain 568).